Reading from the N-terminus, the 85-residue chain is Small muscular protein (85 aa).

Residues Pro19–Pro63 are disordered. Residue Ser36 is modified to Phosphoserine. At Thr47 the chain carries Phosphothreonine.

It belongs to the SMPX family.

Its function is as follows. Plays a role in the regulatory network through which muscle cells coordinate their structural and functional states during growth, adaptation, and repair. The chain is Small muscular protein (Smpx) from Rattus norvegicus (Rat).